We begin with the raw amino-acid sequence, 435 residues long: Histidine--tRNA ligase (435 aa).

It belongs to the class-II aminoacyl-tRNA synthetase family. In terms of assembly, homodimer.

The protein localises to the cytoplasm. The enzyme catalyses tRNA(His) + L-histidine + ATP = L-histidyl-tRNA(His) + AMP + diphosphate + H(+). In Synechococcus elongatus (strain ATCC 33912 / PCC 7942 / FACHB-805) (Anacystis nidulans R2), this protein is Histidine--tRNA ligase.